A 566-amino-acid polypeptide reads, in one-letter code: Pyrophosphate--fructose 6-phosphate 1-phosphotransferase subunit beta 1 (566 aa).

Phosphoserine is present on Ser-16. Residue Gly-105 coordinates diphosphate. Asp-199 serves as a coordination point for Mg(2+). Substrate contacts are provided by residues 227–229, 266–267, 274–276, Glu-335, and 440–443; these read TID, KY, MGR, and YEGR. Asp-229 acts as the Proton acceptor in catalysis.

This sequence belongs to the phosphofructokinase type A (PFKA) family. PPi-dependent PFK group II subfamily. Clade 'Long' sub-subfamily. Tetramer of two alpha (regulatory) and two beta (catalytic) chains. The cofactor is Mg(2+).

It localises to the cytoplasm. The enzyme catalyses beta-D-fructose 6-phosphate + diphosphate = beta-D-fructose 1,6-bisphosphate + phosphate + H(+). The protein operates within carbohydrate degradation; glycolysis; D-glyceraldehyde 3-phosphate and glycerone phosphate from D-glucose: step 3/4. With respect to regulation, allosterically activated by fructose 2,6-bisphosphate. Functionally, catalytic subunit of pyrophosphate--fructose 6-phosphate 1-phosphotransferase. Catalyzes the phosphorylation of D-fructose 6-phosphate, the first committing step of glycolysis. Uses inorganic phosphate (PPi) as phosphoryl donor instead of ATP like common ATP-dependent phosphofructokinases (ATP-PFKs), which renders the reaction reversible, and can thus function both in glycolysis and gluconeogenesis. The polypeptide is Pyrophosphate--fructose 6-phosphate 1-phosphotransferase subunit beta 1 (Arabidopsis thaliana (Mouse-ear cress)).